Here is a 143-residue protein sequence, read N- to C-terminus: MIQFILIQNRHGKNRLSKYYVPFDDDEKVRLKARIHQLISQRNQKFQANFLEWENSKLVYRRYAGLYFCFCVDSTDNDLAILEMIHFFVEILDSFFGNVCELDLIFNFYKVSAILDEIILGGEIGESNKKSVLERIEALEKLE.

It belongs to the adaptor complexes small subunit family. Adaptor protein complex 2 (AP-2) is a heterotetramer composed of two large adaptins (alpha-type subunit apl3 and beta-type subunit apl1), a medium chain (mu-type subunit apm4) and a small adaptin (sigma-type subunit aps2).

It localises to the cell membrane. Its subcellular location is the membrane. The protein localises to the coated pit. In terms of biological role, component of the adaptor complexes which link clathrin to receptors in coated vesicles. Clathrin-associated protein complexes are believed to interact with the cytoplasmic tails of membrane proteins, leading to their selection and concentration. This Schizosaccharomyces pombe (strain 972 / ATCC 24843) (Fission yeast) protein is AP-2 complex subunit sigma (aps2).